We begin with the raw amino-acid sequence, 302 residues long: tRNA dimethylallyltransferase (302 aa).

9–16 (GATATGKS) serves as a coordination point for ATP. 11 to 16 (TATGKS) is a substrate binding site. An interaction with substrate tRNA region spans residues 34 to 37 (DSRQ).

This sequence belongs to the IPP transferase family. Monomer. Mg(2+) is required as a cofactor.

The catalysed reaction is adenosine(37) in tRNA + dimethylallyl diphosphate = N(6)-dimethylallyladenosine(37) in tRNA + diphosphate. In terms of biological role, catalyzes the transfer of a dimethylallyl group onto the adenine at position 37 in tRNAs that read codons beginning with uridine, leading to the formation of N6-(dimethylallyl)adenosine (i(6)A). This chain is tRNA dimethylallyltransferase, found in Nostoc punctiforme (strain ATCC 29133 / PCC 73102).